A 354-amino-acid polypeptide reads, in one-letter code: tRNA N6-adenosine threonylcarbamoyltransferase (354 aa).

His-121, His-125, and Tyr-142 together coordinate a divalent metal cation. Substrate is bound by residues 142–146, Asp-174, Gly-189, Glu-193, and Asn-285; that span reads YVSGG. Residue Asp-313 participates in a divalent metal cation binding.

The protein belongs to the KAE1 / TsaD family. As to quaternary structure, component of the EKC/KEOPS complex composed of at least bud32, cgi121, gon7, kae1 and pcc1; the whole complex dimerizes. A divalent metal cation is required as a cofactor.

It localises to the cytoplasm. The protein localises to the nucleus. It catalyses the reaction L-threonylcarbamoyladenylate + adenosine(37) in tRNA = N(6)-L-threonylcarbamoyladenosine(37) in tRNA + AMP + H(+). Its function is as follows. Component of the EKC/KEOPS complex that is required for the formation of a threonylcarbamoyl group on adenosine at position 37 (t(6)A37) in tRNAs that read codons beginning with adenine. The complex is probably involved in the transfer of the threonylcarbamoyl moiety of threonylcarbamoyl-AMP (TC-AMP) to the N6 group of A37. Kae1 likely plays a direct catalytic role in this reaction, but requires other protein(s) of the complex to fulfill this activity. The EKC/KEOPS complex also promotes both telomere uncapping and telomere elongation. The complex is required for efficient recruitment of transcriptional coactivators. This Neurospora crassa (strain ATCC 24698 / 74-OR23-1A / CBS 708.71 / DSM 1257 / FGSC 987) protein is tRNA N6-adenosine threonylcarbamoyltransferase (gpe-1).